The sequence spans 118 residues: Ribonuclease P protein component (118 aa).

It belongs to the RnpA family. Consists of a catalytic RNA component (M1 or rnpB) and a protein subunit.

The catalysed reaction is Endonucleolytic cleavage of RNA, removing 5'-extranucleotides from tRNA precursor.. Its function is as follows. RNaseP catalyzes the removal of the 5'-leader sequence from pre-tRNA to produce the mature 5'-terminus. It can also cleave other RNA substrates such as 4.5S RNA. The protein component plays an auxiliary but essential role in vivo by binding to the 5'-leader sequence and broadening the substrate specificity of the ribozyme. This is Ribonuclease P protein component from Shewanella oneidensis (strain ATCC 700550 / JCM 31522 / CIP 106686 / LMG 19005 / NCIMB 14063 / MR-1).